Here is a 241-residue protein sequence, read N- to C-terminus: Probable transcriptional regulatory protein lmo1535 (241 aa).

The span at 1-14 (MSGHSKWNNIQGRK) shows a compositional bias: polar residues. Residues 1–22 (MSGHSKWNNIQGRKNAQDSKRS) form a disordered region.

Belongs to the TACO1 family.

It is found in the cytoplasm. The polypeptide is Probable transcriptional regulatory protein lmo1535 (Listeria monocytogenes serovar 1/2a (strain ATCC BAA-679 / EGD-e)).